Here is a 233-residue protein sequence, read N- to C-terminus: 27 kDa hemolymph glycoprotein (233 aa).

A signal peptide spans 1-17 (MIWKTLIVAFMATAVLA). Residues Asn-125 and Asn-156 are each glycosylated (N-linked (GlcNAc...) asparagine).

It belongs to the UPF0408 family. N-glycosylated. As to expression, hemolymph.

The protein resides in the secreted. This is 27 kDa hemolymph glycoprotein from Manduca sexta (Tobacco hawkmoth).